A 624-amino-acid polypeptide reads, in one-letter code: (-)-beta-phellandrene synthase 4, chloroplastic (624 aa).

The N-terminal 48 residues, 1-48, are a transit peptide targeting the chloroplast; it reads MAIVSSVPLASKSCLHKSLISSIHKLKPFCRTIPTLGMSRPGKSVMPS. A disordered region spans residues 41 to 60; sequence PGKSVMPSMSMSSPVSDDGV. A compositionally biased stretch (low complexity) spans 44–56; the sequence is SVMPSMSMSSPVS. Residues Asp375, Asp379, and Asp527 each coordinate Mg(2+). Residues 375–379 carry the DDXXD motif motif; sequence DDMYD.

Belongs to the terpene synthase family. Tpsd subfamily. Requires Mg(2+) as cofactor. Mn(2+) is required as a cofactor.

The protein resides in the plastid. The protein localises to the chloroplast. It carries out the reaction (2E)-geranyl diphosphate = (-)-beta-phellandrene + diphosphate. Its pathway is terpene metabolism; oleoresin biosynthesis. In terms of biological role, terpene synthase (TPS) involved in the biosynthesis of monoterpene natural products included in conifer oleoresin secretions and volatile emissions; these compounds contribute to biotic and abiotic stress defense against herbivores and pathogens. Catalyzes the conversion of (2E)-geranyl diphosphate (GPP) to (-)-beta-phellandrene. The chain is (-)-beta-phellandrene synthase 4, chloroplastic from Picea sitchensis (Sitka spruce).